The primary structure comprises 354 residues: Methionine import ATP-binding protein MetN (354 aa).

The ABC transporter domain maps to 8-250; it reads LDHIDITFRQ…PKEALTQKFI (243 aa). Residue 42–49 participates in ATP binding; sequence GYSGAGKS.

Belongs to the ABC transporter superfamily. Methionine importer (TC 3.A.1.24) family. The complex is composed of two ATP-binding proteins (MetN), two transmembrane proteins (MetI) and a solute-binding protein (MetQ).

It is found in the cell membrane. It carries out the reaction L-methionine(out) + ATP + H2O = L-methionine(in) + ADP + phosphate + H(+). It catalyses the reaction D-methionine(out) + ATP + H2O = D-methionine(in) + ADP + phosphate + H(+). Part of the ABC transporter complex MetNIQ involved in methionine import. Responsible for energy coupling to the transport system. The polypeptide is Methionine import ATP-binding protein MetN (Streptococcus pyogenes serotype M18 (strain MGAS8232)).